The chain runs to 224 residues: Phosphoribosylformylglycinamidine synthase subunit PurQ (224 aa).

In terms of domain architecture, Glutamine amidotransferase type-1 spans 2–224 (KFAVIQFPGS…SILNHAEVKA (223 aa)). The active-site Nucleophile is Cys-86. Active-site residues include His-195 and Glu-197.

In terms of assembly, part of the FGAM synthase complex composed of 1 PurL, 1 PurQ and 2 PurS subunits.

It localises to the cytoplasm. The catalysed reaction is N(2)-formyl-N(1)-(5-phospho-beta-D-ribosyl)glycinamide + L-glutamine + ATP + H2O = 2-formamido-N(1)-(5-O-phospho-beta-D-ribosyl)acetamidine + L-glutamate + ADP + phosphate + H(+). The enzyme catalyses L-glutamine + H2O = L-glutamate + NH4(+). Its pathway is purine metabolism; IMP biosynthesis via de novo pathway; 5-amino-1-(5-phospho-D-ribosyl)imidazole from N(2)-formyl-N(1)-(5-phospho-D-ribosyl)glycinamide: step 1/2. Functionally, part of the phosphoribosylformylglycinamidine synthase complex involved in the purines biosynthetic pathway. Catalyzes the ATP-dependent conversion of formylglycinamide ribonucleotide (FGAR) and glutamine to yield formylglycinamidine ribonucleotide (FGAM) and glutamate. The FGAM synthase complex is composed of three subunits. PurQ produces an ammonia molecule by converting glutamine to glutamate. PurL transfers the ammonia molecule to FGAR to form FGAM in an ATP-dependent manner. PurS interacts with PurQ and PurL and is thought to assist in the transfer of the ammonia molecule from PurQ to PurL. This chain is Phosphoribosylformylglycinamidine synthase subunit PurQ, found in Lactobacillus delbrueckii subsp. bulgaricus (strain ATCC 11842 / DSM 20081 / BCRC 10696 / JCM 1002 / NBRC 13953 / NCIMB 11778 / NCTC 12712 / WDCM 00102 / Lb 14).